A 504-amino-acid polypeptide reads, in one-letter code: 13S globulin seed storage protein 2 (504 aa).

A signal peptide spans 1 to 20 (MSTKLILSFSLCLMVLSCSA). Cystine bridges form between Cys-46-Cys-79 and Cys-122-Cys-320. The Cupin type-1 1 domain occupies 51–265 (LTASEPSRRV…FRDVDRETIS (215 aa)). Disordered regions lie at residues 128–158 (SDSE…GDQH), 214–237 (GQSQ…DDEA), and 289–314 (QDFE…RSNG). Composition is skewed to basic and acidic residues over residues 144-158 (RQSE…GDQH) and 218-231 (RETR…QSRE). One can recognise a Cupin type-1 2 domain in the interval 326–475 (RNFNTPTNTY…SYDISTKEAY (150 aa)).

Belongs to the 11S seed storage protein (globulins) family. Hexamer; each subunit is composed of an acidic and a basic chain derived from a single precursor and linked by a disulfide bond.

In terms of biological role, seed storage protein. This chain is 13S globulin seed storage protein 2 (FA18), found in Fagopyrum esculentum (Common buckwheat).